A 90-amino-acid chain; its full sequence is YcgL domain-containing protein Spro_2755 (90 aa).

A YcgL domain is found at 1-85; the sequence is MLCVIYRSSK…PLENLLKQHL (85 aa).

The protein is YcgL domain-containing protein Spro_2755 of Serratia proteamaculans (strain 568).